A 228-amino-acid chain; its full sequence is Cytochrome c oxidase subunit 2 (228 aa).

The Mitochondrial intermembrane segment spans residues 1 to 14 (MANHSQLGFQDASS). Residues 15 to 45 (PIMEELVEFHDHALIVALAICSLVLYLLAHM) form a helical membrane-spanning segment. Residues 46-58 (LMEKLSSNAVDAQ) are Mitochondrial matrix-facing. The helical transmembrane segment at 59 to 86 (EVELIWTILPAIVLVLLALPSLQILYMM) threads the bilayer. The Mitochondrial intermembrane segment spans residues 87-228 (DEIDEPDLTL…ETWSSLLSAS (142 aa)). The Cu cation site is built by histidine 160, cysteine 195, glutamate 197, cysteine 199, histidine 203, and methionine 206. Position 197 (glutamate 197) interacts with Mg(2+).

Belongs to the cytochrome c oxidase subunit 2 family. As to quaternary structure, component of the cytochrome c oxidase (complex IV, CIV), a multisubunit enzyme composed of 14 subunits. The complex is composed of a catalytic core of 3 subunits MT-CO1, MT-CO2 and MT-CO3, encoded in the mitochondrial DNA, and 11 supernumerary subunits COX4I, COX5A, COX5B, COX6A, COX6B, COX6C, COX7A, COX7B, COX7C, COX8 and NDUFA4, which are encoded in the nuclear genome. The complex exists as a monomer or a dimer and forms supercomplexes (SCs) in the inner mitochondrial membrane with NADH-ubiquinone oxidoreductase (complex I, CI) and ubiquinol-cytochrome c oxidoreductase (cytochrome b-c1 complex, complex III, CIII), resulting in different assemblies (supercomplex SCI(1)III(2)IV(1) and megacomplex MCI(2)III(2)IV(2)). Found in a complex with TMEM177, COA6, COX18, COX20, SCO1 and SCO2. Interacts with TMEM177 in a COX20-dependent manner. Interacts with COX20. Interacts with COX16. It depends on Cu cation as a cofactor.

The protein resides in the mitochondrion inner membrane. The catalysed reaction is 4 Fe(II)-[cytochrome c] + O2 + 8 H(+)(in) = 4 Fe(III)-[cytochrome c] + 2 H2O + 4 H(+)(out). Component of the cytochrome c oxidase, the last enzyme in the mitochondrial electron transport chain which drives oxidative phosphorylation. The respiratory chain contains 3 multisubunit complexes succinate dehydrogenase (complex II, CII), ubiquinol-cytochrome c oxidoreductase (cytochrome b-c1 complex, complex III, CIII) and cytochrome c oxidase (complex IV, CIV), that cooperate to transfer electrons derived from NADH and succinate to molecular oxygen, creating an electrochemical gradient over the inner membrane that drives transmembrane transport and the ATP synthase. Cytochrome c oxidase is the component of the respiratory chain that catalyzes the reduction of oxygen to water. Electrons originating from reduced cytochrome c in the intermembrane space (IMS) are transferred via the dinuclear copper A center (CU(A)) of subunit 2 and heme A of subunit 1 to the active site in subunit 1, a binuclear center (BNC) formed by heme A3 and copper B (CU(B)). The BNC reduces molecular oxygen to 2 water molecules using 4 electrons from cytochrome c in the IMS and 4 protons from the mitochondrial matrix. This Cairina moschata (Muscovy duck) protein is Cytochrome c oxidase subunit 2 (MT-CO2).